Consider the following 697-residue polypeptide: Potassium-transporting ATPase ATP-binding subunit (697 aa).

4 helical membrane-spanning segments follow: residues 55–75 (PIMF…FLPS), 79–99 (SIPG…VLFA), 245–265 (LTLI…YLGF), and 271–291 (VLVA…LSAI). Asp324 (4-aspartylphosphate intermediate) is an active-site residue. Residues Asp361, Glu365, 393 to 400 (FKAETRMS), and Lys412 contribute to the ATP site. Asp535 and Asp539 together coordinate Mg(2+). 3 helical membrane passes run 605 to 625 (FAII…LNIM), 633 to 653 (AILS…PLAM), and 677 to 697 (GGVI…GLFI).

It belongs to the cation transport ATPase (P-type) (TC 3.A.3) family. Type IA subfamily. As to quaternary structure, the system is composed of three essential subunits: KdpA, KdpB and KdpC.

It is found in the cell membrane. It carries out the reaction K(+)(out) + ATP + H2O = K(+)(in) + ADP + phosphate + H(+). Its function is as follows. Part of the high-affinity ATP-driven potassium transport (or Kdp) system, which catalyzes the hydrolysis of ATP coupled with the electrogenic transport of potassium into the cytoplasm. This subunit is responsible for energy coupling to the transport system and for the release of the potassium ions to the cytoplasm. The protein is Potassium-transporting ATPase ATP-binding subunit of Bacillus cereus (strain ZK / E33L).